Reading from the N-terminus, the 311-residue chain is Probable deoxyhypusine synthase (311 aa).

The active-site Nucleophile is K284.

This sequence belongs to the deoxyhypusine synthase family. It depends on NAD(+) as a cofactor.

The catalysed reaction is [eIF5A protein]-L-lysine + spermidine = [eIF5A protein]-deoxyhypusine + propane-1,3-diamine. It functions in the pathway protein modification; eIF5A hypusination. Catalyzes the NAD-dependent oxidative cleavage of spermidine and the subsequent transfer of the butylamine moiety of spermidine to the epsilon-amino group of a specific lysine residue of the eIF-5A precursor protein to form the intermediate deoxyhypusine residue. The polypeptide is Probable deoxyhypusine synthase (Picrophilus torridus (strain ATCC 700027 / DSM 9790 / JCM 10055 / NBRC 100828 / KAW 2/3)).